The chain runs to 194 residues: MNPVYSPGSSGVPYANAKGIGYPAGFPVGYAAAPAYSPNMYPGANPTFQTGYTPGTPYKVSCSPTSGAVPPYSSSPNPYQTAVYPVRSAYPQQSPYAQQGTYYTQPLYAAPPHVIHHTTVVQPNGMPATVYPAPIPPPRGSGVTMGMVAGTTMAMSAGTLLTAHSPTPVAPHPVTVPTYRAPGTPTYSYVPPQW.

Met-1 carries the N-acetylmethionine modification. Over 1-18 (MNPVYSPGSSGVPYANAK) the chain is Cytoplasmic. Ser-6 carries the post-translational modification Phosphoserine. The chain crosses the membrane as a helical span at residues 19 to 41 (GIGYPAGFPVGYAAAPAYSPNMY). Topologically, residues 42–141 (PGANPTFQTG…PAPIPPPRGS (100 aa)) are extracellular. Asn-45 is a glycosylation site (N-linked (GlcNAc...) asparagine). A helical membrane pass occupies residues 142–163 (GVTMGMVAGTTMAMSAGTLLTA). Residues 164–194 (HSPTPVAPHPVTVPTYRAPGTPTYSYVPPQW) are Cytoplasmic-facing.

The protein belongs to the FAM168 family. May form homodimers. May interact with DAZAP2, FAM168A, PRDX6, RBM6, TMTC1 and YPEL2. Interacts with CDC27. Post-translationally, N-glycosylated. As to expression, predominantly expressed in the brain, including olfactory bulb, cortex and cerebellum (at protein level).

Its subcellular location is the cytoplasm. The protein resides in the perinuclear region. The protein localises to the cell membrane. It is found in the cell projection. It localises to the axon. Functionally, inhibitor of neuronal axonal outgrowth. Acts as a negative regulator of CDC42 and STAT3 and a positive regulator of STMN2. Positive regulator of CDC27. This chain is Myelin-associated neurite-outgrowth inhibitor (Fam168b), found in Mus musculus (Mouse).